We begin with the raw amino-acid sequence, 122 residues long: Large ribosomal subunit protein bL17 (122 aa).

The protein belongs to the bacterial ribosomal protein bL17 family. As to quaternary structure, part of the 50S ribosomal subunit. Contacts protein L32.

This Neisseria gonorrhoeae (strain ATCC 700825 / FA 1090) protein is Large ribosomal subunit protein bL17.